The following is an 820-amino-acid chain: Quinate repressor protein (820 aa).

The interval 25–79 (SFEQMLLQQDSNESSRRTSPSRTHSRVDLERHSSHIVSLSSSNGSPSLEDPENRL) is disordered. The span at 59–71 (HIVSLSSSNGSPS) shows a compositional bias: low complexity.

The protein in the N-terminal section; belongs to the shikimate kinase family. It in the 2nd section; belongs to the type-I 3-dehydroquinase family. In the C-terminal section; belongs to the shikimate dehydrogenase family. In terms of assembly, interacts with qutA; transcriptional activator of the quinate utilization pathway genes.

Functionally, multi-domain repressor protein that negatively regulates transcription of the quinate utilization pathway genes. May mediate its repressor activity by binding directly to the qutA activator protein. This is Quinate repressor protein (qutR) from Talaromyces stipitatus (strain ATCC 10500 / CBS 375.48 / QM 6759 / NRRL 1006) (Penicillium stipitatum).